The primary structure comprises 100 residues: Urease subunit gamma (100 aa).

It belongs to the urease gamma subunit family. In terms of assembly, heterotrimer of UreA (gamma), UreB (beta) and UreC (alpha) subunits. Three heterotrimers associate to form the active enzyme.

The protein localises to the cytoplasm. It catalyses the reaction urea + 2 H2O + H(+) = hydrogencarbonate + 2 NH4(+). Its pathway is nitrogen metabolism; urea degradation; CO(2) and NH(3) from urea (urease route): step 1/1. This is Urease subunit gamma from Nocardia farcinica (strain IFM 10152).